Consider the following 215-residue polypeptide: MQIEIKTLDNGSAGTAELPDEIFAATPRADIMARVVHWQLACRRAGTHKVKGMGEVSGTTKKPYRQKGTGNARQGSLRAPQFRTGGAVHGPVVRDHGYDLPKKVRRLGLISALSQKQAEGKLVVIDTAAGMEKTRDLAAKLRALGWRSALIVDGASVDEGFARASRSLLAVDVLPTIGANVYDILNHDVLAITVAGVEALKARLGFGAAEERSAA.

Residues 51-88 (KGMGEVSGTTKKPYRQKGTGNARQGSLRAPQFRTGGAV) form a disordered region.

This sequence belongs to the universal ribosomal protein uL4 family. In terms of assembly, part of the 50S ribosomal subunit.

In terms of biological role, one of the primary rRNA binding proteins, this protein initially binds near the 5'-end of the 23S rRNA. It is important during the early stages of 50S assembly. It makes multiple contacts with different domains of the 23S rRNA in the assembled 50S subunit and ribosome. Its function is as follows. Forms part of the polypeptide exit tunnel. The chain is Large ribosomal subunit protein uL4 from Granulibacter bethesdensis (strain ATCC BAA-1260 / CGDNIH1).